A 191-amino-acid polypeptide reads, in one-letter code: Thymidylate kinase (191 aa).

An ATP-binding site is contributed by 7–14 (GVDGAGKS).

The protein belongs to the thymidylate kinase family.

The catalysed reaction is dTMP + ATP = dTDP + ADP. Functionally, phosphorylation of dTMP to form dTDP in both de novo and salvage pathways of dTTP synthesis. The sequence is that of Thymidylate kinase from Helicobacter pylori (strain P12).